A 436-amino-acid polypeptide reads, in one-letter code: D-amino acid dehydrogenase (436 aa).

3–17 (ILILGSGVIGVTSAW) is a binding site for FAD.

The protein belongs to the DadA oxidoreductase family. FAD is required as a cofactor.

It catalyses the reaction a D-alpha-amino acid + A + H2O = a 2-oxocarboxylate + AH2 + NH4(+). The protein operates within amino-acid degradation; D-alanine degradation; NH(3) and pyruvate from D-alanine: step 1/1. Oxidative deamination of D-amino acids. The polypeptide is D-amino acid dehydrogenase (Photorhabdus laumondii subsp. laumondii (strain DSM 15139 / CIP 105565 / TT01) (Photorhabdus luminescens subsp. laumondii)).